Here is a 216-residue protein sequence, read N- to C-terminus: uncharacterized protein (216 aa).

The next 6 membrane-spanning stretches (helical) occupy residues 12–32, 48–68, 74–94, 134–154, 156–176, and 191–211; these read YVLGVVFVILLPGPNSLFVLA, GVFLGDAVLMLLSALGVASLL, LFIGLKYLGAAYLFYLGVGML, ILFFISFFIQFVDPGYAYPGL, FLVLAVILELVSALYLSFLIF, and LAAGATSGVGALFVGFGVKLA.

This sequence belongs to the Rht family.

The protein localises to the cell membrane. This is an uncharacterized protein from Pseudomonas aeruginosa (strain ATCC 15692 / DSM 22644 / CIP 104116 / JCM 14847 / LMG 12228 / 1C / PRS 101 / PAO1).